A 194-amino-acid polypeptide reads, in one-letter code: CASP-like protein 4C1 (194 aa).

The Cytoplasmic segment spans residues M1–S35. The chain crosses the membrane as a helical span at residues L36–L56. Residues T57–R74 lie on the Extracellular side of the membrane. The helical transmembrane segment at F75–V95 threads the bilayer. Topologically, residues W96 to D114 are cytoplasmic. Residues F115–L135 form a helical membrane-spanning segment. At A136–V157 the chain is on the extracellular side. A helical membrane pass occupies residues A158 to F178. Over R179–S194 the chain is Cytoplasmic.

This sequence belongs to the Casparian strip membrane proteins (CASP) family. As to quaternary structure, homodimer and heterodimers.

The protein resides in the cell membrane. In Arabidopsis thaliana (Mouse-ear cress), this protein is CASP-like protein 4C1.